The chain runs to 153 residues: Glucose-6-phosphate 1-dehydrogenase (153 aa).

R21 and K120 together coordinate NADP(+). K120 contributes to the D-glucose 6-phosphate binding site.

This sequence belongs to the glucose-6-phosphate dehydrogenase family.

The protein localises to the cytoplasm. It is found in the cytosol. It carries out the reaction D-glucose 6-phosphate + NADP(+) = 6-phospho-D-glucono-1,5-lactone + NADPH + H(+). It participates in carbohydrate degradation; pentose phosphate pathway; D-ribulose 5-phosphate from D-glucose 6-phosphate (oxidative stage): step 1/3. In terms of biological role, cytosolic glucose-6-phosphate dehydrogenase that catalyzes the first and rate-limiting step of the oxidative branch within the pentose phosphate pathway/shunt, an alternative route to glycolysis for the dissimilation of carbohydrates and a major source of reducing power and metabolic intermediates for fatty acid and nucleic acid biosynthetic processes. This Sarcophaga bullata (Grey flesh fly) protein is Glucose-6-phosphate 1-dehydrogenase (ZW).